Here is a 306-residue protein sequence, read N- to C-terminus: 4-hydroxy-3-methylbut-2-enyl diphosphate reductase 1 (306 aa).

C10 is a [4Fe-4S] cluster binding site. 2 residues coordinate (2E)-4-hydroxy-3-methylbut-2-enyl diphosphate: H39 and H72. The dimethylallyl diphosphate site is built by H39 and H72. Isopentenyl diphosphate is bound by residues H39 and H72. Residue C94 coordinates [4Fe-4S] cluster. H122 provides a ligand contact to (2E)-4-hydroxy-3-methylbut-2-enyl diphosphate. H122 serves as a coordination point for dimethylallyl diphosphate. H122 contacts isopentenyl diphosphate. E124 acts as the Proton donor in catalysis. T162 serves as a coordination point for (2E)-4-hydroxy-3-methylbut-2-enyl diphosphate. C192 is a binding site for [4Fe-4S] cluster. The (2E)-4-hydroxy-3-methylbut-2-enyl diphosphate site is built by S220, S221, N222, and S264. Dimethylallyl diphosphate-binding residues include S220, S221, N222, and S264. Residues S220, S221, N222, and S264 each coordinate isopentenyl diphosphate.

The protein belongs to the IspH family. [4Fe-4S] cluster serves as cofactor.

The enzyme catalyses isopentenyl diphosphate + 2 oxidized [2Fe-2S]-[ferredoxin] + H2O = (2E)-4-hydroxy-3-methylbut-2-enyl diphosphate + 2 reduced [2Fe-2S]-[ferredoxin] + 2 H(+). The catalysed reaction is dimethylallyl diphosphate + 2 oxidized [2Fe-2S]-[ferredoxin] + H2O = (2E)-4-hydroxy-3-methylbut-2-enyl diphosphate + 2 reduced [2Fe-2S]-[ferredoxin] + 2 H(+). It functions in the pathway isoprenoid biosynthesis; dimethylallyl diphosphate biosynthesis; dimethylallyl diphosphate from (2E)-4-hydroxy-3-methylbutenyl diphosphate: step 1/1. It participates in isoprenoid biosynthesis; isopentenyl diphosphate biosynthesis via DXP pathway; isopentenyl diphosphate from 1-deoxy-D-xylulose 5-phosphate: step 6/6. Functionally, catalyzes the conversion of 1-hydroxy-2-methyl-2-(E)-butenyl 4-diphosphate (HMBPP) into a mixture of isopentenyl diphosphate (IPP) and dimethylallyl diphosphate (DMAPP). Acts in the terminal step of the DOXP/MEP pathway for isoprenoid precursor biosynthesis. In Rhodopseudomonas palustris (strain ATCC BAA-98 / CGA009), this protein is 4-hydroxy-3-methylbut-2-enyl diphosphate reductase 1.